Here is a 312-residue protein sequence, read N- to C-terminus: Taste receptor type 2 member 7 (312 aa).

Topologically, residues 1–9 are extracellular; sequence MTYETDTTL. The helical transmembrane segment at 10 to 30 threads the bilayer; it reads MFVAVCEALVGILGNAFIALV. Topologically, residues 31-49 are cytoplasmic; that stretch reads NFMGWMKNRKITAIDLILS. A helical membrane pass occupies residues 50–70; that stretch reads SLAMSRICLQCIILLDCIILV. The Extracellular segment spans residues 71 to 101; sequence QYPDTYNRGKEMRIIDFFWTLTNHLSVWFAT. Residues 102 to 122 traverse the membrane as a helical segment; the sequence is CLSIFYFFKIANFFHPLFLWI. Over 123–128 the chain is Cytoplasmic; the sequence is KWRIDK. A helical transmembrane segment spans residues 129 to 149; sequence LILRTLLACLILSLCFSLPVT. Over 150-187 the chain is Extracellular; the sequence is ENLTDDFRRCVKTKERINSTLRCKLNKAGYASVKVNLN. N-linked (GlcNAc...) asparagine glycans are attached at residues Asn-151 and Asn-167. Residues 188–208 traverse the membrane as a helical segment; sequence LVMLFPFSVSLVSFLLLILSL. At 209–235 the chain is on the cytoplasmic side; that stretch reads WRHTRQMQLNVTGYNDPSTTAHVKATK. Residues 236–256 form a helical membrane-spanning segment; the sequence is AVISFLVLFIVYCLAFLIATS. Over 257–266 the chain is Extracellular; sequence SYFMPESELA. Residues 267 to 287 traverse the membrane as a helical segment; that stretch reads VIWGELIALIYPSSHSFILIL. Topologically, residues 288 to 312 are cytoplasmic; sequence GNSKLKQASVRVLCRVKTMLKGRKY.

The protein belongs to the G-protein coupled receptor T2R family. Expressed in subsets of taste receptor cells of the tongue and palate epithelium and exclusively in gustducin-positive cells. Expressed in 15% taste bud cells in circumvallate and foliate papillae but only in 2% in fungiform papillae. Expressed in the duodenum, antrum and fundus (part of the stomach) and in gastric endocrine cells.

The protein resides in the membrane. Its function is as follows. Gustducin-coupled receptor implicated in the perception of bitter compounds in the oral cavity and the gastrointestinal tract. Signals through PLCB2 and the calcium-regulated cation channel TRPM5. This is Taste receptor type 2 member 7 (Tas2r7) from Rattus norvegicus (Rat).